Consider the following 391-residue polypeptide: Steroid 3-ketoacyl-CoA thiolase (391 aa).

The active-site Acyl-thioester intermediate is the C93. CoA-binding positions include Q151, 221–223 (RET), and S246. Residues H347 and C377 each act as proton acceptor in the active site. G379 is a binding site for substrate.

This sequence belongs to the thiolase-like superfamily. Thiolase family. Dimer of dimers.

The catalysed reaction is an acyl-CoA + acetyl-CoA = a 3-oxoacyl-CoA + CoA. The enzyme catalyses 3-oxochol-4-en-22-oyl-CoA + acetyl-CoA = 3,22-dioxochol-4-en-24-oyl-CoA + CoA. Its pathway is steroid metabolism; cholesterol degradation. Its function is as follows. Involved in the beta-oxidation of the cholesterol side chain. It is important for utilization of cholesterol as a sole carbon source in vitro and for full virulence in the chronic stage of mouse lung infection. Catalyzes the thiolysis of 3,22-dioxochol-4-en-24-oyl-CoA to yield 3-oxo-4-pregnene-20-carboxyl-CoA (3-OPC-CoA) and acetyl-CoA. Also able to use acetoacetyl-CoA (AcAcCoA) as substrate. The chain is Steroid 3-ketoacyl-CoA thiolase (fadA5) from Mycobacterium tuberculosis (strain ATCC 25618 / H37Rv).